The chain runs to 411 residues: ACT domain-containing protein ACR9 (411 aa).

ACT domains are found at residues 22 to 105 (VVTV…NVSK), 111 to 194 (LLKF…LAGP), and 243 to 322 (LLQI…VIIV).

In terms of biological role, may bind amino acids. This chain is ACT domain-containing protein ACR9, found in Arabidopsis thaliana (Mouse-ear cress).